The primary structure comprises 216 residues: Protein Syd (216 aa).

It belongs to the Syd family.

The protein resides in the cell inner membrane. Interacts with the SecY protein in vivo. May bind preferentially to an uncomplexed state of SecY, thus functioning either as a chelating agent for excess SecY in the cell or as a regulatory factor that negatively controls the translocase function. In Shewanella sp. (strain MR-4), this protein is Protein Syd.